A 71-amino-acid chain; its full sequence is Small ribosomal subunit protein bS21 (71 aa).

The segment at 48–71 (ENATLAKRHAKRNARENARNTRLY) is disordered. Basic and acidic residues predominate over residues 60–71 (NARENARNTRLY).

This sequence belongs to the bacterial ribosomal protein bS21 family.

The sequence is that of Small ribosomal subunit protein bS21 from Haemophilus influenzae (strain 86-028NP).